The following is a 117-amino-acid chain: Probable non-functional immunoglobulinn kappa variable 1-37 (117 aa).

The signal sequence occupies residues 1–22 (MDMRVPAQLLGLLLLWVPGARC). Residues 24 to 117 (IQLTQSPSSL…YYGQRTYNAP (94 aa)) enclose the Ig-like domain.

In terms of assembly, most probably, the immunoglobulin is not assembled due to incorrect folding of light chain. Immunoglobulins are composed of two identical heavy chains and two identical light chains; disulfide-linked.

The protein resides in the secreted. Its subcellular location is the cell membrane. In terms of biological role, probable non-functional open reading frame (ORF) of V region of the variable domain of immunoglobulin light chains. Non-functional ORF generally cannot participate in the synthesis of a productive immunoglobulin chain due to altered V-(D)-J or switch recombination and/or splicing site (at mRNA level) and/or conserved amino acid change (protein level). Immunoglobulins, also known as antibodies, are membrane-bound or secreted glycoproteins produced by B lymphocytes. In the recognition phase of humoral immunity, the membrane-bound immunoglobulins serve as receptors which, upon binding of a specific antigen, trigger the clonal expansion and differentiation of B lymphocytes into immunoglobulins-secreting plasma cells. Secreted immunoglobulins mediate the effector phase of humoral immunity, which results in the elimination of bound antigens. The antigen binding site is formed by the variable domain of one heavy chain, together with that of its associated light chain. Thus, each immunoglobulin has two antigen binding sites with remarkable affinity for a particular antigen. The variable domains are assembled by a process called V-(D)-J rearrangement and can then be subjected to somatic hypermutations which, after exposure to antigen and selection, allow affinity maturation for a particular antigen. This Homo sapiens (Human) protein is Probable non-functional immunoglobulinn kappa variable 1-37.